We begin with the raw amino-acid sequence, 105 residues long: Small ribosomal subunit protein uS10 (105 aa).

This sequence belongs to the universal ribosomal protein uS10 family. As to quaternary structure, part of the 30S ribosomal subunit.

In terms of biological role, involved in the binding of tRNA to the ribosomes. This chain is Small ribosomal subunit protein uS10, found in Rickettsia bellii (strain OSU 85-389).